The primary structure comprises 242 residues: U1 small nuclear ribonucleoprotein C (242 aa).

Residues 3–35 form a Matrin-type; degenerate zinc finger; sequence YLGDYCDVYLTHDSMSVRKAHNSGRNHLRNVVE. A disordered region spans residues 60 to 242; the sequence is GQASSNPMLQ…SSPGPSQEGK (183 aa). Composition is skewed to pro residues over residues 90–107, 136–149, 156–183, and 201–213; these read MLPP…PGAP, PPMP…PLPN, PFPP…PPIP, and PVPP…PGAP. Residues 231-242 are compositionally biased toward polar residues; the sequence is PASSPGPSQEGK.

The protein belongs to the U1 small nuclear ribonucleoprotein C family. U1 snRNP is composed of the 7 core Sm proteins B/B', D1, D2, D3, E, F and G that assemble in a heptameric protein ring on the Sm site of the small nuclear RNA to form the core snRNP, and at least 3 U1 snRNP-specific proteins U1-70K, U1-A and U1-C. U1-C interacts with U1 snRNA and the 5' splice-site region of the pre-mRNA.

Its subcellular location is the nucleus. Its function is as follows. Component of the spliceosomal U1 snRNP, which is essential for recognition of the pre-mRNA 5' splice-site and the subsequent assembly of the spliceosome. U1-C is directly involved in initial 5' splice-site recognition for both constitutive and regulated alternative splicing. The interaction with the 5' splice-site seems to precede base-pairing between the pre-mRNA and the U1 snRNA. Stimulates commitment or early (E) complex formation by stabilizing the base pairing of the 5' end of the U1 snRNA and the 5' splice-site region. The sequence is that of U1 small nuclear ribonucleoprotein C from Ajellomyces capsulatus (strain G186AR / H82 / ATCC MYA-2454 / RMSCC 2432) (Darling's disease fungus).